The following is a 109-amino-acid chain: Ycf20-like protein (109 aa).

This sequence belongs to the ycf20 family.

This is Ycf20-like protein from Synechocystis sp. (strain ATCC 27184 / PCC 6803 / Kazusa).